The primary structure comprises 133 residues: Peptide methionine sulfoxide reductase MsrB (133 aa).

Residues Leu8–Arg130 enclose the MsrB domain. Positions 47, 50, 96, and 99 each coordinate Zn(2+). Cys119 (nucleophile) is an active-site residue.

It belongs to the MsrB Met sulfoxide reductase family. Requires Zn(2+) as cofactor.

The catalysed reaction is L-methionyl-[protein] + [thioredoxin]-disulfide + H2O = L-methionyl-(R)-S-oxide-[protein] + [thioredoxin]-dithiol. The chain is Peptide methionine sulfoxide reductase MsrB from Azotobacter vinelandii (strain DJ / ATCC BAA-1303).